A 352-amino-acid polypeptide reads, in one-letter code: NAD-dependent protein deacetylase sirtuin-2 (352 aa).

Position 16 is a phosphoserine (Ser16). In terms of domain architecture, Deacetylase sirtuin-type spans 20-301 (RLLDELTLEG…LALAELLGWK (282 aa)). Residues 48-52 (AGIST) and 58-60 (DFR) each bind NAD(+). Phosphoserine is present on Ser63. 130–133 (QNID) lines the NAD(+) pocket. His150 functions as the Proton acceptor in the catalytic mechanism. 2 residues coordinate Zn(2+): Cys158 and Cys163. Position 170 is a phosphoserine (Ser170). Residues Cys184 and Cys187 each contribute to the Zn(2+) site. NAD(+)-binding positions include 225–226 (TS), 249–251 (NKE), and Cys287. A disordered region spans residues 314-352 (SIDAQSGAGVPNPSTSASPKKSPPPAKDEARTTEREKPQ). The segment covering 324–333 (PNPSTSASPK) has biased composition (low complexity). Ser331 and Ser335 each carry phosphoserine. Positions 339–352 (AKDEARTTEREKPQ) are enriched in basic and acidic residues.

This sequence belongs to the sirtuin family. Class I subfamily. As to quaternary structure, interacts with CDC20, FOXO3 and FZR1. Associates with microtubules in primary cortical mature neurons. Homotrimer. Interacts (via both phosphorylated, unphosphorylated, active or inactive forms) with HDAC6; the interaction is necessary for the complex to interact with alpha-tubulin, suggesting that these proteins belong to a large complex that deacetylates the cytoskeleton. Interacts with FOXO1; the interaction is disrupted upon serum-starvation or oxidative stress, leading to increased level of acetylated FOXO1 and induction of autophagy. Interacts with RELA; the interaction occurs in the cytoplasm and is increased in a TNF-alpha-dependent manner. Interacts with HOXA10; the interaction is direct. Interacts with YWHAB and YWHAG; the interactions occur in a AKT-dependent manner and increase SIRT2-dependent TP53 deacetylation. Interacts with MAPK1/ERK2 and MAPK3/ERK1; the interactions increase SIRT2 stability and deacetylation activity. Interacts (phosphorylated form) with KMT5A isoform 2; the interaction is direct, stimulates KMT5A-mediated methyltransferase activity on histone at 'Lys-20' (H4K20me1) and is increased in a H(2)O(2)-induced oxidative stress-dependent manner. Interacts with G6PD; the interaction is enhanced by H(2)O(2) treatment. Interacts with a G1/S-specific cyclin E-CDK2 complex. Interacts with AURKA, CDK5R1 (p35 form) and CDK5 and HIF1A. Interacts with the tRNA ligase SARS1; recruited to the VEGFA promoter via interaction with SARS1. Interacts with BEX4; negatively regulates alpha-tubulin deacetylation by SIRT2. Interacts with MORN3; the interaction enhances the ubiquitination of p53/TP53. Zn(2+) is required as a cofactor. Post-translationally, phosphorylated at phosphoserine and phosphothreonine. Phosphorylated at Ser-331 by a mitotic kinase CDK1/cyclin B at the G2/M transition; phosphorylation regulates the delay in cell-cycle progression. Phosphorylated at Ser-331 by a mitotic kinase G1/S-specific cyclin E/Cdk2 complex; phosphorylation inactivates SIRT2-mediated alpha-tubulin deacetylation and thereby negatively regulates cell adhesion, cell migration and neurite outgrowth during neuronal differentiation. Phosphorylated by cyclin A/Cdk2 and p35-Cdk5 complexes and to a lesser extent by the cyclin D3/Cdk4 and cyclin B/Cdk1, in vitro. Dephosphorylated at Ser-331 by CDC14A and CDC14B around early anaphase. Acetylated by EP300; acetylation leads both to the decreased of SIRT2-mediated alpha-tubulin deacetylase activity and SIRT2-mediated down-regulation of TP53 transcriptional activity. In terms of processing, ubiquitinated.

It localises to the nucleus. It is found in the cytoplasm. The protein resides in the perinuclear region. Its subcellular location is the cytoskeleton. The protein localises to the microtubule organizing center. It localises to the centrosome. It is found in the centriole. The protein resides in the spindle. Its subcellular location is the midbody. The protein localises to the chromosome. It localises to the perikaryon. It is found in the cell projection. The protein resides in the growth cone. Its subcellular location is the myelin membrane. The enzyme catalyses N(6)-acetyl-L-lysyl-[protein] + NAD(+) + H2O = 2''-O-acetyl-ADP-D-ribose + nicotinamide + L-lysyl-[protein]. It carries out the reaction N(6)-tetradecanoyl-L-lysyl-[protein] + NAD(+) + H2O = 2''-O-tetradecanoyl-ADP-D-ribose + nicotinamide + L-lysyl-[protein]. The catalysed reaction is N(6)-hexadecanoyl-L-lysyl-[protein] + NAD(+) + H2O = 2''-O-hexadecanoyl-ADP-D-ribose + nicotinamide + L-lysyl-[protein]. Inhibited by Sirtinol, A3 and M15 small molecules. Inhibited by nicotinamide. Inhibited by a macrocyclic peptide inhibitor S2iL5. Inhibited by EP300-induced acetylation. In terms of biological role, NAD-dependent protein deacetylase, which deacetylates internal lysines on histone and alpha-tubulin as well as many other proteins such as key transcription factors. Participates in the modulation of multiple and diverse biological processes such as cell cycle control, genomic integrity, microtubule dynamics, cell differentiation, metabolic networks, and autophagy. Plays a major role in the control of cell cycle progression and genomic stability. Functions in the antephase checkpoint preventing precocious mitotic entry in response to microtubule stress agents, and hence allowing proper inheritance of chromosomes. Positively regulates the anaphase promoting complex/cyclosome (APC/C) ubiquitin ligase complex activity by deacetylating CDC20 and FZR1, then allowing progression through mitosis. Associates both with chromatin at transcriptional start sites (TSSs) and enhancers of active genes. Plays a role in cell cycle and chromatin compaction through epigenetic modulation of the regulation of histone H4 'Lys-20' methylation (H4K20me1) during early mitosis. Specifically deacetylates histone H4 at 'Lys-16' (H4K16ac) between the G2/M transition and metaphase enabling H4K20me1 deposition by KMT5A leading to ulterior levels of H4K20me2 and H4K20me3 deposition throughout cell cycle, and mitotic S-phase progression. Deacetylates KMT5A modulating KMT5A chromatin localization during the mitotic stress response. Also deacetylates histone H3 at 'Lys-57' (H3K56ac) during the mitotic G2/M transition. During oocyte meiosis progression, may deacetylate histone H4 at 'Lys-16' (H4K16ac) and alpha-tubulin, regulating spindle assembly and chromosome alignment by influencing microtubule dynamics and kinetochore function. Deacetylates histone H4 at 'Lys-16' (H4K16ac) at the VEGFA promoter and thereby contributes to regulate expression of VEGFA, a key regulator of angiogenesis. Deacetylates alpha-tubulin at 'Lys-40' and hence controls neuronal motility, oligodendroglial cell arbor projection processes and proliferation of non-neuronal cells. Phosphorylation at Ser-368 by a G1/S-specific cyclin E-CDK2 complex inactivates SIRT2-mediated alpha-tubulin deacetylation, negatively regulating cell adhesion, cell migration and neurite outgrowth during neuronal differentiation. Deacetylates PARD3 and participates in the regulation of Schwann cell peripheral myelination formation during early postnatal development and during postinjury remyelination. Involved in several cellular metabolic pathways. Plays a role in the regulation of blood glucose homeostasis by deacetylating and stabilizing phosphoenolpyruvate carboxykinase PCK1 activity in response to low nutrient availability. Acts as a key regulator in the pentose phosphate pathway (PPP) by deacetylating and activating the glucose-6-phosphate G6PD enzyme, and therefore, stimulates the production of cytosolic NADPH to counteract oxidative damage. Maintains energy homeostasis in response to nutrient deprivation as well as energy expenditure by inhibiting adipogenesis and promoting lipolysis. Attenuates adipocyte differentiation by deacetylating and promoting FOXO1 interaction to PPARG and subsequent repression of PPARG-dependent transcriptional activity. Plays a role in the regulation of lysosome-mediated degradation of protein aggregates by autophagy in neuronal cells. Deacetylates FOXO1 in response to oxidative stress or serum deprivation, thereby negatively regulating FOXO1-mediated autophagy. Deacetylates a broad range of transcription factors and co-regulators regulating target gene expression. Deacetylates transcriptional factor FOXO3 stimulating the ubiquitin ligase SCF(SKP2)-mediated FOXO3 ubiquitination and degradation. Deacetylates HIF1A and therefore promotes HIF1A degradation and inhibition of HIF1A transcriptional activity in tumor cells in response to hypoxia. Deacetylates RELA in the cytoplasm inhibiting NF-kappaB-dependent transcription activation upon TNF-alpha stimulation. Inhibits transcriptional activation by deacetylating p53/TP53 and EP300. Also deacetylates EIF5A. Functions as a negative regulator on oxidative stress-tolerance in response to anoxia-reoxygenation conditions. Plays a role as tumor suppressor. In addition to protein deacetylase activity, also has activity toward long-chain fatty acyl groups and mediates protein-lysine demyristoylation and depalmitoylation of target proteins, such as ARF6 and KRAS, thereby regulating their association with membranes. The chain is NAD-dependent protein deacetylase sirtuin-2 (SIRT2) from Pongo abelii (Sumatran orangutan).